Reading from the N-terminus, the 504-residue chain is 2,3-bisphosphoglycerate-independent phosphoglycerate mutase (504 aa).

Mn(2+) is bound by residues Asp11 and Ser61. Catalysis depends on Ser61, which acts as the Phosphoserine intermediate. Substrate-binding positions include His122, 152–153 (RD), Arg183, Arg189, 255–258 (RNDR), and Lys329. Asp396, His400, Asp437, His438, and His455 together coordinate Mn(2+).

It belongs to the BPG-independent phosphoglycerate mutase family. As to quaternary structure, monomer. The cofactor is Mn(2+).

It carries out the reaction (2R)-2-phosphoglycerate = (2R)-3-phosphoglycerate. Its pathway is carbohydrate degradation; glycolysis; pyruvate from D-glyceraldehyde 3-phosphate: step 3/5. Its function is as follows. Catalyzes the interconversion of 2-phosphoglycerate and 3-phosphoglycerate. This chain is 2,3-bisphosphoglycerate-independent phosphoglycerate mutase, found in Bacteroides thetaiotaomicron (strain ATCC 29148 / DSM 2079 / JCM 5827 / CCUG 10774 / NCTC 10582 / VPI-5482 / E50).